Reading from the N-terminus, the 436-residue chain is p-aminobenzoyl-glutamate hydrolase subunit A (436 aa).

This sequence belongs to the peptidase M20 family. Forms a heterodimer with AbgB. The cofactor is Mn(2+).

Its function is as follows. Component of the p-aminobenzoyl-glutamate hydrolase multicomponent enzyme system which catalyzes the cleavage of p-aminobenzoyl-glutamate (PABA-GLU) to form p-aminobenzoate (PABA) and glutamate. AbgAB does not degrade dipeptides and the physiological role of abgABT should be clarified. The sequence is that of p-aminobenzoyl-glutamate hydrolase subunit A (abgA) from Escherichia coli (strain K12).